The primary structure comprises 626 residues: Hormonally up-regulated neu tumor-associated kinase homolog B (626 aa).

ATP-binding positions include K1–V2 and K17. A Protein kinase domain is found at K1–L246. The active-site Proton acceptor is D112. Residues K336–E357 show a composition bias toward basic and acidic residues. 3 disordered regions span residues K336–G407, V477–G574, and Q590–A615. The segment covering S374 to K390 has biased composition (polar residues). A compositionally biased stretch (basic and acidic residues) spans P392–S405. Positions D518–F532 are enriched in polar residues. The span at S539–S555 shows a compositional bias: low complexity. Residues C556 to S566 are compositionally biased toward polar residues.

This sequence belongs to the protein kinase superfamily. CAMK Ser/Thr protein kinase family. SNF1 subfamily. As to expression, in the egg, expressed predominantly in the animal hemisphere. This pattern of expression persists throughout the cleavage and blastula stages. At the gastrula stage, expression is restricted to the ectoderm. In later-stage embryos, expressed over the entire embryonic surface including the open neural plate at stage 15 and the neural tube at stage 22. In tadpoles, strongly expressed in the neural tube, motor neurons, brain regions and sensory organs (otic vesicle and eye). Also expressed in the perisomitic mesoderm, brachial arches and embryonic epidermis of tadpoles.

It catalyses the reaction L-seryl-[protein] + ATP = O-phospho-L-seryl-[protein] + ADP + H(+). The catalysed reaction is L-threonyl-[protein] + ATP = O-phospho-L-threonyl-[protein] + ADP + H(+). The polypeptide is Hormonally up-regulated neu tumor-associated kinase homolog B (hunk-b) (Xenopus laevis (African clawed frog)).